Consider the following 258-residue polypeptide: L-aminoadipate-semialdehyde dehydrogenase-phosphopantetheinyl transferase (258 aa).

This sequence belongs to the P-Pant transferase superfamily. AcpS family.

The protein localises to the cytoplasm. It localises to the nucleus. The catalysed reaction is apo-[ACP] + CoA = holo-[ACP] + adenosine 3',5'-bisphosphate + H(+). Catalyzes the transfer of a 4'-phosphopantetheine moiety from coenzyme A to a serine residue of acceptor proteins, such as alpha-aminoadipate reductase. Necessary for alpha-aminoadipate reductase activity. This Schizosaccharomyces pombe (strain 972 / ATCC 24843) (Fission yeast) protein is L-aminoadipate-semialdehyde dehydrogenase-phosphopantetheinyl transferase (lys7).